Consider the following 78-residue polypeptide: Large ribosomal subunit protein bL28 (78 aa).

The disordered stretch occupies residues 1–23 (MSRVCQVTGKRPITGNNVSHSKR).

Belongs to the bacterial ribosomal protein bL28 family.

In Marinomonas sp. (strain MWYL1), this protein is Large ribosomal subunit protein bL28.